Here is a 707-residue protein sequence, read N- to C-terminus: U-box domain-containing protein 2 (707 aa).

The U-box domain maps to 239–313; the sequence is RVPSDFRCSL…ASWCETNNVY (75 aa). ARM repeat units lie at residues 453-492, 494-534, 536-575, 577-615, and 617-656; these read TDNR…NLSI, DNNK…SLSV, EEYK…NLSI, HENK…NLAT, and REGK…QLCT.

The catalysed reaction is S-ubiquitinyl-[E2 ubiquitin-conjugating enzyme]-L-cysteine + [acceptor protein]-L-lysine = [E2 ubiquitin-conjugating enzyme]-L-cysteine + N(6)-ubiquitinyl-[acceptor protein]-L-lysine.. Its pathway is protein modification; protein ubiquitination. In terms of biological role, functions as an E3 ubiquitin ligase. This is U-box domain-containing protein 2 (PUB2) from Arabidopsis thaliana (Mouse-ear cress).